The following is a 59-amino-acid chain: Cortexin domain containing 2 (59 aa).

Residues 20-40 traverse the membrane as a helical segment; it reads FAIAFVVLVFVFLIVMVFRCV.

The protein localises to the membrane. The sequence is that of Cortexin domain containing 2 from Mus musculus (Mouse).